A 651-amino-acid chain; its full sequence is MSGELNGNDTSAQAAVSAGSVLEGAAFADEGEQHNESMKTLVLGALGVVYGDIGTSPIYAFREALHAAATNGILARSDILGVVSLIFWALTLVVTVKYVLFVLRADNNGEGGILSLMALVRGALKGRPDLILGVGICGAALFFGDAVITPAISVLSAMEGLEIVAPNLTPFVVPATVVILVTLFSVQKLGTGRVAIVFGPIMALWFVALGASGLWHIFDDPTVMAALNPYYAVRFLTVSPAVAFVTVGAVFLAMTGAEALYADLGHFGRKPIVRAWLWIVFPCLLLNYFGQAAFILSHGEAAALPFFQMIPSFALWPMVLLATAATVIASQAVITGAYSVARQAVQLNILPRLEIQHTSEKLHGQIYIPRVNLLLGLAVVILVLGFEKSSNLAAAYGIAVTGNMLVTTVLLYIVMTRIWNWRVSRALPIILGFLVIDMLFFSANIIKVHEGGWASIGIATVLVLIMWTWVRGTRHLFQKTRKAEVPLDLIVEQMAKRPPTIVPGTAVFLTGDPKSAPTALMHSLKHYKVLHENNVILTVVTASKPWVASADRARVSQYNERFMLVTLTFGYMQQPNIPRALGLCRRLGWKFDIMTTSFFLSRRSLKASVHSGMPLWQDKLFILLARTASDATEYFQIPTGRVVEIGTQVNI.

A run of 12 helical transmembrane segments spans residues 41 to 61 (LVLG…IYAF), 82 to 102 (VVSL…VLFV), 130 to 150 (LILG…VITP), 163 to 183 (IVAP…LVTL), 194 to 214 (VAIV…ASGL), 235 to 255 (FLTV…LAMT), 276 to 296 (WLWI…AFIL), 309 to 329 (MIPS…TVIA), 366 to 386 (IYIP…VLGF), 395 to 415 (AYGI…YIVM), 426 to 446 (ALPI…ANII), and 450 to 470 (EGGW…WTWV).

Belongs to the HAK/KUP transporter (TC 2.A.72) family.

It is found in the cell inner membrane. The catalysed reaction is K(+)(in) + H(+)(in) = K(+)(out) + H(+)(out). Functionally, transport of potassium into the cell. Likely operates as a K(+):H(+) symporter. The polypeptide is Probable potassium transport system protein Kup (Brucella melitensis biotype 1 (strain ATCC 23456 / CCUG 17765 / NCTC 10094 / 16M)).